The chain runs to 599 residues: Elongation factor 4 (599 aa).

The region spanning 2–184 (KNIRNFSIIA…RLVRDIPPPE (183 aa)) is the tr-type G domain. GTP-binding positions include 14-19 (DHGKST) and 131-134 (NKID).

The protein belongs to the TRAFAC class translation factor GTPase superfamily. Classic translation factor GTPase family. LepA subfamily.

It is found in the cell inner membrane. The enzyme catalyses GTP + H2O = GDP + phosphate + H(+). In terms of biological role, required for accurate and efficient protein synthesis under certain stress conditions. May act as a fidelity factor of the translation reaction, by catalyzing a one-codon backward translocation of tRNAs on improperly translocated ribosomes. Back-translocation proceeds from a post-translocation (POST) complex to a pre-translocation (PRE) complex, thus giving elongation factor G a second chance to translocate the tRNAs correctly. Binds to ribosomes in a GTP-dependent manner. This Citrobacter koseri (strain ATCC BAA-895 / CDC 4225-83 / SGSC4696) protein is Elongation factor 4.